Reading from the N-terminus, the 106-residue chain is UPF0145 protein azo0572 (106 aa).

The protein belongs to the UPF0145 family.

This Azoarcus sp. (strain BH72) protein is UPF0145 protein azo0572.